The primary structure comprises 396 residues: Putative carbamoyltransferase YgeW (396 aa).

Residues 71–74, Q98, 165–168, and 330–331 each bind carbamoyl phosphate; these read STRT, HPTQ, and CL.

It belongs to the aspartate/ornithine carbamoyltransferase superfamily. In terms of assembly, homotrimer.

The polypeptide is Putative carbamoyltransferase YgeW (ygeW) (Escherichia coli O6:H1 (strain CFT073 / ATCC 700928 / UPEC)).